Here is a 164-residue protein sequence, read N- to C-terminus: R-phycoerythrin alpha chain (164 aa).

2 residues coordinate (2R,3E)-phycoerythrobilin: C82 and C139.

The protein belongs to the phycobiliprotein family. In terms of assembly, heterodimer of an alpha and a beta chain. Post-translationally, contains two covalently linked bilin chromophores.

It is found in the plastid. The protein resides in the chloroplast thylakoid membrane. Its function is as follows. Light-harvesting photosynthetic bile pigment-protein from the phycobiliprotein complex. This Lophosiphonia boldii (Red alga) protein is R-phycoerythrin alpha chain (cpeA).